Consider the following 3739-residue polypeptide: Cardiomyopathy-associated protein 5 (3739 aa).

Disordered regions lie at residues 1–205 (MESG…PPIT), 268–814 (SLEP…SAFV), 835–884 (VSVS…AIQS), 967–1270 (LSED…SDVP), 1288–1313 (TQASLEPEAEDLVPPPTSGWEKRDAK), 1325–1637 (SSAL…NLVS), 1650–1969 (EMNR…EKGK), 1986–2016 (SSIPDSKVSDNEDLETRPGPSVEKAVPAIEP), 2065–2246 (FLSN…WETR), 2273–2318 (AVGE…LALD), 2377–2498 (VYPE…SAVE), 2513–2532 (KKQETWSDRPTVHTFQTSKD), and 2579–2616 (SADGVPPMGGTAQEPEGTSVKDEEFSVTSKPAGLSEDQ). Over residues 18 to 47 (ADEEVAQELETEEESEGEGEETAAESEEEP) the composition is skewed to acidic residues. Positions 48-62 (DARLSDEDEEGKTKQ) are enriched in basic and acidic residues. The segment covering 84-106 (TWETNSSRSSTPWASGESQTSGI) has biased composition (polar residues). A compositionally biased stretch (basic residues) spans 130-153 (RTRKRTQKSKRGSPSLRRKGSKKR). Phosphoserine is present on S155. Composition is skewed to polar residues over residues 156 to 175 (LESQDVLTNQEDGPSISESP) and 325 to 336 (ADSNLNVPSSTE). The stretch at 380 to 406 (ATMVLERAKEELEQNAQGKESSEDDAS) forms a coiled coil. Basic and acidic residues-rich tracts occupy residues 479-637 (IVHR…REEE), 644-663 (SIVHREEEHAPEPIVHREEE), and 670-730 (SIVH…ERGV). 2 tandem repeats follow at residues 482–493 (REEEHAPEPIVH) and 494–505 (REEEHAPEPIVH). A 20 X 12 AA approximate tandem repeats of R-[DE]-[EK]-[EG]-H-[AV]-P-E-[PS]-[IM]-V-[HLR] region spans residues 482 to 720 (REEEHAPEPI…EEHAPEPMVH (239 aa)). The stretch at 506–519 (REEEHAPEPESIVH) is one 3; approximate repeat. Residues 520-531 (REEEHAPESIVH) form repeat 4. The 5; approximate repeat unit spans residues 532 to 545 (REEEHAPEPVPIVH). The 6; approximate repeat unit spans residues 546–559 (REEEHAPEPESIVH). A run of 4 repeats spans residues 560–571 (REEEHAPEPIVH), 572–583 (RDKGHALEPIVH), 584–595 (REEEHAPEPIVH), and 596–607 (RDEGHAPEPIVH). An 11; approximate repeat occupies 608–621 (REEEHVPEPESIVR). Residues 622-633 (KGEEHAPEPIVH) form a 12; approximate repeat. One copy of the 14; approximate repeat lies at 634-647 (REEEQVPEPESIVH). Repeat unit 15 spans residues 648 to 659 (REEEHAPEPIVH). The 16; approximate repeat unit spans residues 660-673 (REEEQVPEPESIVH). Tandem repeats lie at residues 674-685 (REEEHAPEPMVL), 686-696 (REEHAPEPIVR), 697-708 (REEEHAPEPIVH), and 709-720 (REEEHAPEPMVH). Over residues 740–756 (TEPEDSSLEEEIIELDY) the composition is skewed to acidic residues. Position 850 is a phosphoserine (S850). Polar residues-rich tracts occupy residues 861 to 884 (PAMTSVSEQSLSPSTTEKTSAIQS) and 1151 to 1161 (CLTSPSEQTVL). Basic and acidic residues-rich tracts occupy residues 1188–1197 (AETEQNKVEP) and 1230–1242 (EHSEPSQEREESS). The segment covering 1337 to 1351 (TSVLPTSQPSVSPES) has biased composition (polar residues). Composition is skewed to basic and acidic residues over residues 1441 to 1460 (LEQRMLSKNEPEVAKPHSPP) and 1476 to 1486 (TEVKQESKITR). The span at 1522–1540 (ASSSATTVPVTKLDSNSTK) shows a compositional bias: polar residues. Composition is skewed to basic and acidic residues over residues 1620 to 1631 (NDKHEEITRSPD), 1697 to 1706 (IDSRDRDRSL), 1726 to 1742 (GPAELQRRGKEQEENRK), 1760 to 1770 (IEQKEPKRTLH), 1786 to 1803 (DKPELGVKQLAEKKENLE), and 1836 to 1850 (EKPDGLVNQHEDRKP). Polar residues predominate over residues 1854-1863 (QLESSESTDL). 4 stretches are compositionally biased toward basic and acidic residues: residues 1874–1885 (DTDHTSETRNQE), 1896–1916 (LSQEPRRVQSKAVDDSEEGRK), 1992–2001 (KVSDNEDLET), and 2153–2165 (ARKEEPSSDHKET). Positions 2181 to 2190 (KSAQSAFTRM) are enriched in polar residues. A Phosphoserine modification is found at S2192. Basic and acidic residues-rich tracts occupy residues 2212–2244 (GEDRLRQEMPKPTSLEHCEEEVERPTEEKDGWE), 2279–2299 (RMPESRPFKLEESKAAERLEQ), 2306–2318 (KLMEKPSKTLALD), 2377–2419 (VYPE…ETDG), and 2429–2448 (ELEKSGESRVDLKEERRRFV). S2411 carries the phosphoserine modification. Position 2495 is a phosphoserine (S2495). Basic and acidic residues predominate over residues 2513 to 2523 (KKQETWSDRPT). A coiled-coil region spans residues 2640–2664 (SVDQEESEQMQDKLQYLEEKASFKS). Disordered regions lie at residues 2667–2725 (VHDE…QPTV), 2742–2773 (LSPGSGKQKSTVEESSEEATKTLTSFPESSAE), 2791–2835 (GPEK…GMPL), 2881–2959 (EKNE…EREI), 3027–3047 (LESEPSSQGNEAGNASPDVNL), and 3111–3174 (PEEP…QKEP). Residues 2682–2709 (SKLEVPDRKITSLKENKTKETHKTKEEI) are compositionally biased toward basic and acidic residues. A required for RYR2 clustering region spans residues 2731–3041 (YFEKYTLIDY…SSQGNEAGNA (311 aa)). Over residues 2762–2773 (KTLTSFPESSAE) the composition is skewed to polar residues. Composition is skewed to basic and acidic residues over residues 2791 to 2804 (GPEKDDSKLSHAEM) and 2812 to 2828 (KPDDRNAPKGISRDVDS). S2905 carries the phosphoserine modification. Residues 2918 to 2929 (YILKDDILHDES) are compositionally biased toward basic and acidic residues. Positions 3030–3047 (EPSSQGNEAGNASPDVNL) are enriched in polar residues. A compositionally biased stretch (basic and acidic residues) spans 3153-3162 (VWDRTEDQSA). Residues 3187 to 3214 (KSLVSEMDKALDIHKDHEVSALDTAISA) form an amphipathic helix H1 region. A B-box coiled-coil; BBC region spans residues 3215–3342 (VKVQLGEFLE…ERLLSAMEST (128 aa)). The stretch at 3244–3323 (FNTIEEKCSK…REAEELDETV (80 aa)) forms a coiled coil. The segment at 3301 to 3318 (SMDTAKDTLETIVREAEE) is amphipathic helix H2. Fibronectin type-III domains are found at residues 3374-3475 (VPQP…TAPS) and 3476-3568 (TPVI…TRGT). The segment at 3421–3437 (EINELVEEYRLTVKESC) is amphipathic helix H3. Residues 3550 to 3735 (NASGTSEQSE…LHLGLEPPDS (186 aa)) enclose the B30.2/SPRY domain.

In terms of assembly, interacts with PRKAR2A. Interacts with ACTN2, DES and DTNBP1/dysbindin. Interacts with DMD/dystrophin. Interacts with the calcineurin catalytic subunit PPP3CA. Interacts with TTN. Interacts with CAPN3; this interaction, which results in CMYA5 proteolysis, may protect CAPN3 from autolysis. Interacts with FSD2. In cardiac muscles, identified in a complex composed of FSD2, CMYA5 and RYR2. Phosphorylated by PKA. In terms of tissue distribution, expressed in skin as well as in cardiac muscle. Expressed in skeletal muscle (at protein level).

Its subcellular location is the nucleus. The protein localises to the cytoplasm. It is found in the perinuclear region. The protein resides in the myofibril. It localises to the sarcomere. Its subcellular location is the m line. The protein localises to the sarcoplasmic reticulum. Its function is as follows. May serve as an anchoring protein that mediates the subcellular compartmentation of protein kinase A (PKA) via binding to PRKAR2A. May attenuate calcineurin ability to induce slow-fiber gene program in muscle and may negatively modulate skeletal muscle regeneration. Plays a role in the assembly of ryanodine receptor (RYR2) clusters in striated muscle. This is Cardiomyopathy-associated protein 5 (Cmya5) from Mus musculus (Mouse).